The chain runs to 23 residues: Defensin D4 (23 aa).

The protein belongs to the DEFL family. Group IV subfamily. Distributed in the epidermal cell layer of leaves and in the subepidermal layer region of stems. Not in roots.

It localises to the secreted. The protein resides in the cell wall. In terms of biological role, antimicrobial peptide. Active against Fusarium spp., Gram-positive and Gram-negative bacterial pathogens. The protein is Defensin D4 of Spinacia oleracea (Spinach).